The following is a 78-amino-acid chain: D-alanyl carrier protein (78 aa).

Residues 1–78 (MDVENTVVEI…KIIAKAKELQ (78 aa)) enclose the Carrier domain. O-(pantetheine 4'-phosphoryl)serine is present on Ser-36.

Belongs to the DltC family. Post-translationally, 4'-phosphopantetheine is transferred from CoA to a specific serine of apo-DCP.

The protein resides in the cytoplasm. It participates in cell wall biogenesis; lipoteichoic acid biosynthesis. Its function is as follows. Carrier protein involved in the D-alanylation of lipoteichoic acid (LTA). The loading of thioester-linked D-alanine onto DltC is catalyzed by D-alanine--D-alanyl carrier protein ligase DltA. The DltC-carried D-alanyl group is further transferred to cell membrane phosphatidylglycerol (PG) by forming an ester bond, probably catalyzed by DltD. D-alanylation of LTA plays an important role in modulating the properties of the cell wall in Gram-positive bacteria, influencing the net charge of the cell wall. The sequence is that of D-alanyl carrier protein from Latilactobacillus sakei subsp. sakei (strain 23K) (Lactobacillus sakei subsp. sakei).